Reading from the N-terminus, the 82-residue chain is Toxin Tpa7 (82 aa).

An N-terminal signal peptide occupies residues 1–20; it reads MKGMILLISCLMLIEVVVEC. Residues 21–82 enclose the LCN-type CS-alpha/beta domain; it reads KEGYPLDTLN…KIWDLKKNKC (62 aa). Disulfide bonds link cysteine 32/cysteine 82, cysteine 36/cysteine 58, cysteine 44/cysteine 63, and cysteine 48/cysteine 65.

The protein belongs to the long (4 C-C) scorpion toxin superfamily. Sodium channel inhibitor family. Beta subfamily. As to expression, expressed by the venom gland.

Its subcellular location is the secreted. Beta toxins bind voltage-independently at site-4 of sodium channels (Nav) and shift the voltage of activation toward more negative potentials thereby affecting sodium channel activation and promoting spontaneous and repetitive firing. This Tityus pachyurus (Colombian scorpion) protein is Toxin Tpa7.